Consider the following 286-residue polypeptide: Apoptosis inhibitor 1 (286 aa).

BIR repeat units lie at residues 29 to 96 (LIER…CAYA) and 131 to 199 (LQSR…CYFV). Zn(2+)-binding residues include C169, C172, H189, and C196. The RING-type zinc-finger motif lies at 238–274 (CKVCLERQRDAVLMPCRHFCVCVQCYFGLDQKCPTCR).

Acts by blocking cellular apoptosis early in infection. Later, stimulates caspase-3-like protease activity and induces apoptosis, probably to favor the release of occluded virions. The chain is Apoptosis inhibitor 1 (IAP1) from Lepidoptera (butterflies and moths).